A 201-amino-acid chain; its full sequence is Protein MJ0810 (201 aa).

In terms of domain architecture, AMMECR1 spans 7–197; it reads EEGTFAVRYA…EVEPRGEVIE (191 aa).

This is Protein MJ0810 from Methanocaldococcus jannaschii (strain ATCC 43067 / DSM 2661 / JAL-1 / JCM 10045 / NBRC 100440) (Methanococcus jannaschii).